The primary structure comprises 22 residues: Chlorate reductase subunit gamma (22 aa).

The interval 1–22 is disordered; sequence EXSEQNPNILEIKPGDTVKVXT.

Heterotrimer of alpha, beta and gamma subunits. Heme b is required as a cofactor.

Its subcellular location is the cytoplasm. Its function is as follows. May transfer electrons to the iron-sulfur centers of the beta subunit of chlorate reductase. The protein is Chlorate reductase subunit gamma of Stutzerimonas chloritidismutans (Pseudomonas chloritidismutans).